The chain runs to 309 residues: Enoyl-CoA hydratase 2, peroxisomal (309 aa).

Substrate contacts are provided by residues 95–96 (HG), Lys-124, 208–213 (DYNPLH), Gly-231, and Phe-261. Positions 183-295 (PQRQPLTVCE…TKVKERNKTV (113 aa)) constitute a MaoC-like domain. A Microbody targeting signal motif is present at residues 307–309 (SSL).

In terms of tissue distribution, ubiquitous.

It is found in the peroxisome. The catalysed reaction is a (3R)-3-hydroxyacyl-CoA = a (2E)-enoyl-CoA + H2O. Its pathway is lipid metabolism; fatty acid beta-oxidation. Functionally, bidirectional monofunctional enoyl-CoA hydratase 2 involved in the degradation of even cis-unsaturated fatty acids. Devoid of 3-hydroxyacyl-CoA dehydrogenase activity. The chain is Enoyl-CoA hydratase 2, peroxisomal (ECH2) from Arabidopsis thaliana (Mouse-ear cress).